We begin with the raw amino-acid sequence, 379 residues long: Cytochrome b (379 aa).

Helical transmembrane passes span 33 to 53, 77 to 98, 113 to 133, and 178 to 198; these read FGSL…FLAM, WLIR…FIHV, WNIG…GYVL, and FFAF…VHLL. Positions 83 and 97 each coordinate heme b. Heme b contacts are provided by H182 and H196. Position 201 (H201) interacts with a ubiquinone. 4 helical membrane passes run 226-246, 288-308, 320-340, and 347-367; these read IKDL…ALFF, LGGV…PLLN, ITQT…WIGG, and FTTI…IIMP.

This sequence belongs to the cytochrome b family. The cytochrome bc1 complex contains 11 subunits: 3 respiratory subunits (MT-CYB, CYC1 and UQCRFS1), 2 core proteins (UQCRC1 and UQCRC2) and 6 low-molecular weight proteins (UQCRH/QCR6, UQCRB/QCR7, UQCRQ/QCR8, UQCR10/QCR9, UQCR11/QCR10 and a cleavage product of UQCRFS1). This cytochrome bc1 complex then forms a dimer. The cofactor is heme b.

The protein localises to the mitochondrion inner membrane. Its function is as follows. Component of the ubiquinol-cytochrome c reductase complex (complex III or cytochrome b-c1 complex) that is part of the mitochondrial respiratory chain. The b-c1 complex mediates electron transfer from ubiquinol to cytochrome c. Contributes to the generation of a proton gradient across the mitochondrial membrane that is then used for ATP synthesis. This chain is Cytochrome b (MT-CYB), found in Deltamys kempi (Kemp's grass mouse).